Consider the following 245-residue polypeptide: 1-(5-phosphoribosyl)-5-[(5-phosphoribosylamino)methylideneamino] imidazole-4-carboxamide isomerase (245 aa).

D8 serves as the catalytic Proton acceptor. D130 acts as the Proton donor in catalysis.

Belongs to the HisA/HisF family.

The protein localises to the cytoplasm. The enzyme catalyses 1-(5-phospho-beta-D-ribosyl)-5-[(5-phospho-beta-D-ribosylamino)methylideneamino]imidazole-4-carboxamide = 5-[(5-phospho-1-deoxy-D-ribulos-1-ylimino)methylamino]-1-(5-phospho-beta-D-ribosyl)imidazole-4-carboxamide. It participates in amino-acid biosynthesis; L-histidine biosynthesis; L-histidine from 5-phospho-alpha-D-ribose 1-diphosphate: step 4/9. The protein is 1-(5-phosphoribosyl)-5-[(5-phosphoribosylamino)methylideneamino] imidazole-4-carboxamide isomerase of Azotobacter vinelandii (strain DJ / ATCC BAA-1303).